Consider the following 132-residue polypeptide: Interleukin-5 (132 aa).

A signal peptide spans 1 to 19 (MHLRLTLVALGAAYVCANA). N-linked (GlcNAc...) asparagine glycans are attached at residues N74 and N88.

The protein belongs to the IL-5 family. In terms of assembly, homodimer; disulfide-linked. Interacts with IL5RA. Interacts with CSF2RB.

It is found in the secreted. Functionally, homodimeric cytokine expressed predominantly by T-lymphocytes and NK cells that plays an important role in the survival, differentiation, and chemotaxis of eosinophils. Also acts on activated and resting B-cells to induce immunoglobulin production, growth, and differentiation. Mechanistically, exerts its biological effects through a receptor composed of IL5RA subunit and the cytokine receptor common subunit beta/CSF2RB. Binding to the receptor leads to activation of various kinases including LYN, SYK and JAK2 and thereby propagates signals through the RAS-MAPK and JAK-STAT5 pathways respectively. This is Interleukin-5 (IL5) from Ovis aries (Sheep).